Reading from the N-terminus, the 380-residue chain is Cytochrome b (380 aa).

Helical transmembrane passes span 33–53, 77–98, 113–133, and 178–198; these read FGSL…FLAM, WLIR…FLHV, WNMG…GYVL, and FFAF…VHLL. His83 and His97 together coordinate heme b. The heme b site is built by His182 and His196. His201 lines the a ubiquinone pocket. 4 helical membrane passes run 226-246, 288-308, 320-340, and 347-367; these read IKDF…TLFF, LGGV…PLLH, ITQI…WIGG, and FITI…IFMP.

Belongs to the cytochrome b family. As to quaternary structure, the cytochrome bc1 complex contains 11 subunits: 3 respiratory subunits (MT-CYB, CYC1 and UQCRFS1), 2 core proteins (UQCRC1 and UQCRC2) and 6 low-molecular weight proteins (UQCRH/QCR6, UQCRB/QCR7, UQCRQ/QCR8, UQCR10/QCR9, UQCR11/QCR10 and a cleavage product of UQCRFS1). This cytochrome bc1 complex then forms a dimer. Heme b is required as a cofactor.

The protein localises to the mitochondrion inner membrane. In terms of biological role, component of the ubiquinol-cytochrome c reductase complex (complex III or cytochrome b-c1 complex) that is part of the mitochondrial respiratory chain. The b-c1 complex mediates electron transfer from ubiquinol to cytochrome c. Contributes to the generation of a proton gradient across the mitochondrial membrane that is then used for ATP synthesis. In Microtus oregoni (Creeping vole), this protein is Cytochrome b (MT-CYB).